Here is a 170-residue protein sequence, read N- to C-terminus: Cathelicidin antimicrobial peptide (170 aa).

The first 30 residues, Met1–Ala30, serve as a signal peptide directing secretion. A propeptide spans Gln31–Lys131 (cathelin-like domain (CLD)). 2 disulfides stabilise this stretch: Cys86-Cys97 and Cys108-Cys125. Positions Phe150–Gly162 are active core.

This sequence belongs to the cathelicidin family. Monomer, homodimer or homotrimer (in vitro). Oligomerizes as tetra- or hexamer in solution (in vitro). Post-translationally, proteolytically cleaved by proteinase PRTN3 into antibacterial peptide LL-37. Proteolytically cleaved by cathepsin CTSG and neutrophil elastase ELANE. In terms of processing, resistant to proteolytic degradation in solution, and when bound to both zwitterionic (mimicking mammalian membranes) and negatively charged membranes (mimicking bacterial membranes). After secretion onto the skin surface, the CAMP gene product is processed by a serine protease-dependent mechanism into multiple novel antimicrobial peptides distinct from and shorter than cathelicidin LL-37. These peptides show enhanced antimicrobial action, acquiring the ability to kill skin pathogens such as S.aureus, E.coli and C.albicans. These peptides have lost the ability to stimulate CXCL8/IL8 release from keratinocytes. The peptides act synergistically, killing bacteria at lower concentrations when present together, and maintain activity at increased salt condition.

It is found in the secreted. It localises to the vesicle. Functionally, antimicrobial protein that is an integral component of the innate immune system. Binds to bacterial lipopolysaccharides (LPS). Acts via neutrophil N-formyl peptide receptors to enhance the release of CXCL2. Postsecretory processing generates multiple cathelicidin antimicrobial peptides with various lengths which act as a topical antimicrobial defense in sweat on skin. The unprocessed precursor form, cathelicidin antimicrobial peptide, inhibits the growth of Gram-negative E.coli and E.aerogenes with efficiencies comparable to that of the mature peptide LL-37 (in vitro). Its function is as follows. Antimicrobial peptide that is an integral component of the innate immune system. Binds to bacterial lipopolysaccharides (LPS). Causes membrane permeabilization by forming transmembrane pores (in vitro). Causes lysis of E.coli. Exhibits antimicrobial activity against Gram-negative bacteria such as P.aeruginosa, S.typhimurium, E.aerogenes, E.coli and P.syringae, Gram-positive bacteria such as L.monocytogenes, S.epidermidis, S.pyogenes and S.aureus, as well as vancomycin-resistant enterococci (in vitro). Exhibits antimicrobial activity against methicillin-resistant S.aureus, P.mirabilis, and C.albicans in low-salt media, but not in media containing 100 mM NaCl (in vitro). Forms chiral supramolecular assemblies with quinolone signal (PQS) molecules of P.aeruginosa, which may lead to interference of bacterial quorum signaling and perturbance of bacterial biofilm formation. May form supramolecular fiber-like assemblies on bacterial membranes. Induces cytokine and chemokine producation as well as TNF/TNFA and CSF2/GMCSF production in normal human keratinocytes. Exhibits hemolytic activity against red blood cells. In terms of biological role, exhibits antimicrobial activity against E.coli and B.megaterium (in vitro). The polypeptide is Cathelicidin antimicrobial peptide (Cebus capucinus (White-faced sapajou)).